A 455-amino-acid polypeptide reads, in one-letter code: Bifunctional protein GlmU (455 aa).

A pyrophosphorylase region spans residues 1–227 (MLTDIVILAA…ATEALGVNDP (227 aa)). UDP-N-acetyl-alpha-D-glucosamine-binding positions include 8-11 (LAAG), lysine 22, glutamine 73, 78-79 (GT), 100-102 (YGD), glycine 137, glutamate 152, asparagine 167, and asparagine 225. Aspartate 102 provides a ligand contact to Mg(2+). Asparagine 225 is a binding site for Mg(2+). Residues 228–248 (VQLAILERVFQRQQLRALQMQ) are linker. An N-acetyltransferase region spans residues 249 to 455 (GLRVADPARV…HWQRPRRDKK (207 aa)). Arginine 331 and lysine 349 together coordinate UDP-N-acetyl-alpha-D-glucosamine. Histidine 361 functions as the Proton acceptor in the catalytic mechanism. 2 residues coordinate UDP-N-acetyl-alpha-D-glucosamine: tyrosine 364 and asparagine 375. Acetyl-CoA is bound by residues alanine 378, 384–385 (NY), serine 403, alanine 421, and arginine 438. The tract at residues 420 to 455 (GAGSTITKEVPPGGLTLSRSPQRTIPHWQRPRRDKK) is disordered.

The protein in the N-terminal section; belongs to the N-acetylglucosamine-1-phosphate uridyltransferase family. In the C-terminal section; belongs to the transferase hexapeptide repeat family. As to quaternary structure, homotrimer. Requires Mg(2+) as cofactor.

Its subcellular location is the cytoplasm. It catalyses the reaction alpha-D-glucosamine 1-phosphate + acetyl-CoA = N-acetyl-alpha-D-glucosamine 1-phosphate + CoA + H(+). It carries out the reaction N-acetyl-alpha-D-glucosamine 1-phosphate + UTP + H(+) = UDP-N-acetyl-alpha-D-glucosamine + diphosphate. It participates in nucleotide-sugar biosynthesis; UDP-N-acetyl-alpha-D-glucosamine biosynthesis; N-acetyl-alpha-D-glucosamine 1-phosphate from alpha-D-glucosamine 6-phosphate (route II): step 2/2. Its pathway is nucleotide-sugar biosynthesis; UDP-N-acetyl-alpha-D-glucosamine biosynthesis; UDP-N-acetyl-alpha-D-glucosamine from N-acetyl-alpha-D-glucosamine 1-phosphate: step 1/1. It functions in the pathway bacterial outer membrane biogenesis; LPS lipid A biosynthesis. Functionally, catalyzes the last two sequential reactions in the de novo biosynthetic pathway for UDP-N-acetylglucosamine (UDP-GlcNAc). The C-terminal domain catalyzes the transfer of acetyl group from acetyl coenzyme A to glucosamine-1-phosphate (GlcN-1-P) to produce N-acetylglucosamine-1-phosphate (GlcNAc-1-P), which is converted into UDP-GlcNAc by the transfer of uridine 5-monophosphate (from uridine 5-triphosphate), a reaction catalyzed by the N-terminal domain. The protein is Bifunctional protein GlmU of Acidithiobacillus ferrooxidans (strain ATCC 23270 / DSM 14882 / CIP 104768 / NCIMB 8455) (Ferrobacillus ferrooxidans (strain ATCC 23270)).